The primary structure comprises 921 residues: 2-oxoadipate dehydrogenase complex component E1 (921 aa).

N6-succinyllysine occurs at positions 184 and 189. A disordered region spans residues 300–319 (GKTRGRQQSREDGDYSPNGS). Residues Lys-801 and Lys-819 each carry the N6-succinyllysine modification.

It belongs to the alpha-ketoglutarate dehydrogenase family. In terms of assembly, the 2-oxoadipate dehydrogenase complex is composed of OADH (2-oxoadipate dehydrogenase; E1a), DLST (dihydrolipoamide succinyltransferase; E2) and DLD (dihydrolipoamide dehydrogenase; E3). E1a functional unit is a dimer. It depends on thiamine diphosphate as a cofactor.

It is found in the mitochondrion. It carries out the reaction N(6)-[(R)-lipoyl]-L-lysyl-[protein] + 2-oxoadipate + H(+) = N(6)-[(R)-S(8)-glutaryldihydrolipoyl]-L-lysyl-[protein] + CO2. It participates in amino-acid degradation. Functionally, 2-oxoadipate dehydrogenase (E1a) component of the 2-oxoadipate dehydrogenase complex (OADHC). Participates in the first step, rate limiting for the overall conversion of 2-oxoadipate (alpha-ketoadipate) to glutaryl-CoA and CO(2) catalyzed by the whole OADHC. Catalyzes the irreversible decarboxylation of 2-oxoadipate via the thiamine diphosphate (ThDP) cofactor and subsequent transfer of the decarboxylated acyl intermediate on an oxidized dihydrolipoyl group that is covalently amidated to the E2 enzyme (dihydrolipoyllysine-residue succinyltransferase or DLST). Can catalyze the decarboxylation of 2-oxoglutarate in vitro, but at a much lower rate than 2-oxoadipate. Responsible for the last step of L-lysine, L-hydroxylysine and L-tryptophan catabolism with the common product being 2-oxoadipate. The protein is 2-oxoadipate dehydrogenase complex component E1 (Dhtkd1) of Mus musculus (Mouse).